We begin with the raw amino-acid sequence, 172 residues long: Translation initiation factor IF-3 (172 aa).

Belongs to the IF-3 family. As to quaternary structure, monomer.

It is found in the cytoplasm. Its function is as follows. IF-3 binds to the 30S ribosomal subunit and shifts the equilibrium between 70S ribosomes and their 50S and 30S subunits in favor of the free subunits, thus enhancing the availability of 30S subunits on which protein synthesis initiation begins. The chain is Translation initiation factor IF-3 from Bartonella tribocorum (strain CIP 105476 / IBS 506).